The sequence spans 435 residues: GPI-anchor transamidase component PIGU (435 aa).

The Cytoplasmic segment spans residues 1 to 3; that stretch reads MAA. A helical membrane pass occupies residues 4 to 22; the sequence is PLALVLVVAVTVRAALFRS. Topologically, residues 23–78 are lumenal; sequence SLAEFISERVEVVSPLSSWKRVVEGLSLLDLGVSPYSGAVFHETPLIIYLFHFLID. A helical membrane pass occupies residues 79 to 99; sequence YAELVFMITDALTAIALYFAI. Over 100 to 136 the chain is Cytoplasmic; it reads QDFNKVVFKKQKLLLELDQYAPDVAELIRTPMEMRYI. Helical transmembrane passes span 137-158, 159-178, 179-194, and 195-205; these read PLKV…VAKS, TCAI…IKGS, VFLS…YQTL, and YPVTLFAPGLL. The Cytoplasmic portion of the chain corresponds to 206 to 222; that stretch reads YLLQRQYIPVKVKSKAF. Residue K216 participates in a cardiolipin binding. Residues 223–244 traverse the membrane as a helical segment; sequence WIFSWEYAMMYIGSLVVIVCLS. Residues 245-286 are Lumenal-facing; that stretch reads FFLLSSWDFIPAVYGFILSVPDLTPNIGLFWYFFAEMFEHFS. Residues 287–306 form a helical membrane-spanning segment; the sequence is LFFVCVFQINVFFYTVPLAI. Residues 307–311 lie on the Cytoplasmic side of the membrane; it reads KLKEH. K309 is an a cardiolipin binding site. 2 helical membrane-spanning segments follow: residues 312 to 331 and 332 to 345; these read PIFF…SYPT and VGDV…FPVW. At 346–354 the chain is on the cytoplasmic side; it reads NHLYRFLRN. Residues 355-372 form a helical membrane-spanning segment; sequence VFVLTCIIVVCSLLFPVL. The Lumenal portion of the chain corresponds to 373-384; the sequence is WHLWIYAGSANS. A 2-acyl-6-[6-phosphoethanolamine-alpha-D-mannosyl-(1-&gt;2)-6-phosphoethanolamine-alpha-D-mannosyl-(1-&gt;6)-2-phosphoethanolamine-alpha-D-mannosyl-(1-&gt;4)-alpha-D-glucosaminyl]-1-(1-radyl,2-acyl-sn-glycero-3-phospho)-1D-myo-inositol-binding residues include N383 and N385. The chain crosses the membrane as a helical span at residues 385–406; that stretch reads NFFYAITLTFNVGQILLISDYF. The Cytoplasmic portion of the chain corresponds to 407 to 435; it reads YAFLRREYYLTHGLYLTAKDGTEAMLVLK.

The protein belongs to the PIGU family. In terms of assembly, heteropentamer. Part of the GPI-anchor transamidase complex, consisting of PIGK, PIGT, PIGS, PIGU and GAA1.

The protein resides in the endoplasmic reticulum membrane. Its pathway is glycolipid biosynthesis; glycosylphosphatidylinositol-anchor biosynthesis. In terms of biological role, component of the glycosylphosphatidylinositol-anchor (GPI-anchor) transamidase (GPI-T) complex that catalyzes the formation of the linkage between a proprotein and a GPI-anchor and participates in GPI anchored protein biosynthesis. Binds the lipid portion of GPI-anchor. May act as an organizer in the transmembrane layer to recruit other subunits, and thus is essential for assembly of the complex. In Cricetulus griseus (Chinese hamster), this protein is GPI-anchor transamidase component PIGU.